A 303-amino-acid polypeptide reads, in one-letter code: DnaJ homolog subfamily C member 17 (303 aa).

The J domain maps to 11-76 (DLYALLGIEE…AARAAYDKVR (66 aa)). 2 disordered regions span residues 104–123 (ERQA…SATT) and 150–170 (IRQD…GKGT). The residue at position 112 (S112) is a Phosphoserine. A compositionally biased stretch (basic and acidic residues) spans 150–166 (IRQDREQRLRGRTENTE). The 72-residue stretch at 178–249 (KCKKEDESQG…NPLKVSWLEG (72 aa)) folds into the RRM domain. K264 carries the post-translational modification N6-methyllysine.

As to expression, expressed in the thyroid gland.

Its subcellular location is the cytoplasm. The protein localises to the nucleus. Its function is as follows. May negatively affect PAX8-induced thyroglobulin/TG transcription. In Mus musculus (Mouse), this protein is DnaJ homolog subfamily C member 17 (Dnajc17).